Reading from the N-terminus, the 246-residue chain is Biosynthetic peptidoglycan transglycosylase (246 aa).

Residues 27 to 47 (VVFCFFFAVFALLLIFRFVPI) form a helical membrane-spanning segment.

This sequence belongs to the glycosyltransferase 51 family.

Its subcellular location is the cell inner membrane. It carries out the reaction [GlcNAc-(1-&gt;4)-Mur2Ac(oyl-L-Ala-gamma-D-Glu-L-Lys-D-Ala-D-Ala)](n)-di-trans,octa-cis-undecaprenyl diphosphate + beta-D-GlcNAc-(1-&gt;4)-Mur2Ac(oyl-L-Ala-gamma-D-Glu-L-Lys-D-Ala-D-Ala)-di-trans,octa-cis-undecaprenyl diphosphate = [GlcNAc-(1-&gt;4)-Mur2Ac(oyl-L-Ala-gamma-D-Glu-L-Lys-D-Ala-D-Ala)](n+1)-di-trans,octa-cis-undecaprenyl diphosphate + di-trans,octa-cis-undecaprenyl diphosphate + H(+). It functions in the pathway cell wall biogenesis; peptidoglycan biosynthesis. Peptidoglycan polymerase that catalyzes glycan chain elongation from lipid-linked precursors. This Haemophilus influenzae (strain ATCC 51907 / DSM 11121 / KW20 / Rd) protein is Biosynthetic peptidoglycan transglycosylase.